Here is a 279-residue protein sequence, read N- to C-terminus: Diaminopimelate epimerase (279 aa).

The substrate site is built by Asn-11 and Asn-64. Cys-73 (proton donor) is an active-site residue. Substrate contacts are provided by residues 74–75 (GN), Asn-170, and 187–188 (ER). Cys-196 acts as the Proton acceptor in catalysis. A substrate-binding site is contributed by 197 to 198 (GS). The disordered stretch occupies residues 255–279 (NTDHQRRRHSLSRSPSGRPRLQECR).

This sequence belongs to the diaminopimelate epimerase family. As to quaternary structure, homodimer.

The protein localises to the cytoplasm. It catalyses the reaction (2S,6S)-2,6-diaminopimelate = meso-2,6-diaminopimelate. The protein operates within amino-acid biosynthesis; L-lysine biosynthesis via DAP pathway; DL-2,6-diaminopimelate from LL-2,6-diaminopimelate: step 1/1. Catalyzes the stereoinversion of LL-2,6-diaminopimelate (L,L-DAP) to meso-diaminopimelate (meso-DAP), a precursor of L-lysine. In Methanopyrus kandleri (strain AV19 / DSM 6324 / JCM 9639 / NBRC 100938), this protein is Diaminopimelate epimerase.